A 123-amino-acid chain; its full sequence is SOSS complex subunit C homolog (123 aa).

The protein belongs to the SOSS-C family.

This is SOSS complex subunit C homolog from Drosophila ananassae (Fruit fly).